The chain runs to 233 residues: Charged multivesicular body protein 4c (233 aa).

2 disordered regions span residues 1 to 24 (MSKL…SPQE) and 173 to 233 (QEEL…AWAT). The interval 1 to 153 (MSKLGKFFKG…EISEAFSQRV (153 aa)) is intramolecular interaction with C-terminus. The stretch at 125 to 183 (LNKIDDLMQEITEQQDIAQEISEAFSQRVGFGDDFDEDELMAELEELEQEELNKKMTNI) forms a coiled coil. The segment at 154-233 (GFGDDFDEDE…DIKQLAAWAT (80 aa)) is intramolecular interaction with N-terminus. Residues 204–216 (SSTARRSRAASSQ) are compositionally biased toward low complexity. Serine 210 carries the post-translational modification Phosphoserine; by AURKB.

Belongs to the SNF7 family. As to quaternary structure, probable core component of the endosomal sorting required for transport complex III (ESCRT-III). ESCRT-III components are thought to multimerize to form a flat lattice on the perimeter membrane of the endosome. Several assembly forms of ESCRT-III may exist that interact and act sequentially. Self-associates. Interacts with CHMP2A. Interacts with CHMP4A. Interacts with CHMP4B. Interacts with CHMP6. Interacts with VPS4A. Interacts with PDCD6IP; the interaction is direct. Phosphorylated at Ser-210 by AURKB during cytokinesis: together with ZFYVE19/ANCHR, phosphorylated CHMP4C retains abscission-competent VPS4 (VPS4A and/or VPS4B) at the midbody ring until abscission checkpoint signaling is terminated at late cytokinesis. As to expression, expressed in heart, spleen and kidney.

It localises to the cytoplasm. It is found in the cytosol. Its subcellular location is the late endosome membrane. The protein localises to the midbody. The protein resides in the midbody ring. Its function is as follows. Probable core component of the endosomal sorting required for transport complex III (ESCRT-III) which is involved in multivesicular bodies (MVBs) formation and sorting of endosomal cargo proteins into MVBs. MVBs contain intraluminal vesicles (ILVs) that are generated by invagination and scission from the limiting membrane of the endosome and mostly are delivered to lysosomes enabling degradation of membrane proteins, such as stimulated growth factor receptors, lysosomal enzymes and lipids. The MVB pathway appears to require the sequential function of ESCRT-O, -I,-II and -III complexes. ESCRT-III proteins mostly dissociate from the invaginating membrane before the ILV is released. The ESCRT machinery also functions in topologically equivalent membrane fission events, such as the terminal stages of cytokinesis and the budding of enveloped viruses (HIV-1 and other lentiviruses). Key component of the cytokinesis checkpoint, a process required to delay abscission to prevent both premature resolution of intercellular chromosome bridges and accumulation of DNA damage: upon phosphorylation by AURKB, together with ZFYVE19/ANCHR, retains abscission-competent VPS4 (VPS4A and/or VPS4B) at the midbody ring until abscission checkpoint signaling is terminated at late cytokinesis. Deactivation of AURKB results in dephosphorylation of CHMP4C followed by its dissociation from ANCHR and VPS4 and subsequent abscission. ESCRT-III proteins are believed to mediate the necessary vesicle extrusion and/or membrane fission activities, possibly in conjunction with the AAA ATPase VPS4. Involved in HIV-1 p6- and p9-dependent virus release. CHMP4A/B/C are required for the exosomal release of SDCBP, CD63 and syndecan. The polypeptide is Charged multivesicular body protein 4c (CHMP4C) (Homo sapiens (Human)).